The chain runs to 462 residues: ATP synthase subunit beta (462 aa).

Residue 151–158 (GGAGVGKT) participates in ATP binding.

This sequence belongs to the ATPase alpha/beta chains family. In terms of assembly, F-type ATPases have 2 components, CF(1) - the catalytic core - and CF(0) - the membrane proton channel. CF(1) has five subunits: alpha(3), beta(3), gamma(1), delta(1), epsilon(1). CF(0) has four main subunits: a(1), b(1), b'(1) and c(9-12).

The protein localises to the cell inner membrane. It carries out the reaction ATP + H2O + 4 H(+)(in) = ADP + phosphate + 5 H(+)(out). Functionally, produces ATP from ADP in the presence of a proton gradient across the membrane. The catalytic sites are hosted primarily by the beta subunits. The chain is ATP synthase subunit beta from Chlorobium phaeobacteroides (strain BS1).